A 443-amino-acid chain; its full sequence is Tubulin beta chain (443 aa).

GTP is bound by residues Q11, E69, S138, G142, T143, G144, N204, and N226. E69 lines the Mg(2+) pocket.

This sequence belongs to the tubulin family. In terms of assembly, dimer of alpha and beta chains. A typical microtubule is a hollow water-filled tube with an outer diameter of 25 nm and an inner diameter of 15 nM. Alpha-beta heterodimers associate head-to-tail to form protofilaments running lengthwise along the microtubule wall with the beta-tubulin subunit facing the microtubule plus end conferring a structural polarity. Microtubules usually have 13 protofilaments but different protofilament numbers can be found in some organisms and specialized cells. It depends on Mg(2+) as a cofactor.

The protein resides in the cytoplasm. The protein localises to the cytoskeleton. In terms of biological role, tubulin is the major constituent of microtubules, a cylinder consisting of laterally associated linear protofilaments composed of alpha- and beta-tubulin heterodimers. Microtubules grow by the addition of GTP-tubulin dimers to the microtubule end, where a stabilizing cap forms. Below the cap, tubulin dimers are in GDP-bound state, owing to GTPase activity of alpha-tubulin. The protein is Tubulin beta chain of Thalassiosira weissflogii (Marine diatom).